A 584-amino-acid polypeptide reads, in one-letter code: Proteasome-associated ATPase (584 aa).

A coiled-coil region spans residues 16–91 (EELASQVRLL…KEEVDRLAQP (76 aa)). 273–278 (GCGKTL) is an ATP binding site. A docks into pockets in the proteasome alpha-ring region spans residues 583–584 (YL).

The protein belongs to the AAA ATPase family. As to quaternary structure, homohexamer. Assembles into a hexameric ring structure that caps the 20S proteasome core. Strongly interacts with the prokaryotic ubiquitin-like protein Pup through a hydrophobic interface; the interacting region of ARC lies in its N-terminal coiled-coil domain. There is one Pup binding site per ARC hexamer ring. Upon ATP-binding, the C-terminus of ARC interacts with the alpha-rings of the proteasome core, possibly by binding to the intersubunit pockets.

It functions in the pathway protein degradation; proteasomal Pup-dependent pathway. ATPase which is responsible for recognizing, binding, unfolding and translocation of pupylated proteins into the bacterial 20S proteasome core particle. May be essential for opening the gate of the 20S proteasome via an interaction with its C-terminus, thereby allowing substrate entry and access to the site of proteolysis. Thus, the C-termini of the proteasomal ATPase may function like a 'key in a lock' to induce gate opening and therefore regulate proteolysis. This Nocardioides sp. (strain ATCC BAA-499 / JS614) protein is Proteasome-associated ATPase.